The following is a 332-amino-acid chain: Glyceraldehyde-3-phosphate dehydrogenase (332 aa).

NAD(+) contacts are provided by residues 12 to 13, D34, K78, and T120; that span reads RI. D-glyceraldehyde 3-phosphate contacts are provided by residues 149-151, T180, 209-210, and R232; these read SCT and TG. Residue C150 is the Nucleophile of the active site. N314 is an NAD(+) binding site.

Belongs to the glyceraldehyde-3-phosphate dehydrogenase family. Homotetramer.

It localises to the cytoplasm. The catalysed reaction is D-glyceraldehyde 3-phosphate + phosphate + NAD(+) = (2R)-3-phospho-glyceroyl phosphate + NADH + H(+). It functions in the pathway carbohydrate degradation; glycolysis; pyruvate from D-glyceraldehyde 3-phosphate: step 1/5. In terms of biological role, catalyzes the oxidative phosphorylation of glyceraldehyde 3-phosphate (G3P) to 1,3-bisphosphoglycerate (BPG) using the cofactor NAD. The first reaction step involves the formation of a hemiacetal intermediate between G3P and a cysteine residue, and this hemiacetal intermediate is then oxidized to a thioester, with concomitant reduction of NAD to NADH. The reduced NADH is then exchanged with the second NAD, and the thioester is attacked by a nucleophilic inorganic phosphate to produce BPG. The polypeptide is Glyceraldehyde-3-phosphate dehydrogenase (gapA) (Buchnera aphidicola subsp. Schizaphis graminum (strain Sg)).